We begin with the raw amino-acid sequence, 95 residues long: Aspartyl/glutamyl-tRNA(Asn/Gln) amidotransferase subunit C (95 aa).

This sequence belongs to the GatC family. Heterotrimer of A, B and C subunits.

The catalysed reaction is L-glutamyl-tRNA(Gln) + L-glutamine + ATP + H2O = L-glutaminyl-tRNA(Gln) + L-glutamate + ADP + phosphate + H(+). The enzyme catalyses L-aspartyl-tRNA(Asn) + L-glutamine + ATP + H2O = L-asparaginyl-tRNA(Asn) + L-glutamate + ADP + phosphate + 2 H(+). Its function is as follows. Allows the formation of correctly charged Asn-tRNA(Asn) or Gln-tRNA(Gln) through the transamidation of misacylated Asp-tRNA(Asn) or Glu-tRNA(Gln) in organisms which lack either or both of asparaginyl-tRNA or glutaminyl-tRNA synthetases. The reaction takes place in the presence of glutamine and ATP through an activated phospho-Asp-tRNA(Asn) or phospho-Glu-tRNA(Gln). This is Aspartyl/glutamyl-tRNA(Asn/Gln) amidotransferase subunit C from Lysinibacillus sphaericus (strain C3-41).